Here is a 347-residue protein sequence, read N- to C-terminus: MFALASMTTSGDEALNARYKESVSLSVGLCESLPEQFKLIETPINSFLLVANVMPNDDRPWDSHPASGADFHNIRMPRLERLRALIRCDRGYNNGKGGEAGQRAGEDDERMDEGVPEEGAPRSPHPPPFAHYEVYDSWSWQRALRVDKDDVIREAVAELAKPANWQGTAVEDPLPLMWLLFYGRRSFCDDPECLYRARFGHPGPLLLPNYMYRPAEDASSFLAGLCRCVRSVYGCEFGGGSHVNPAQVPFDHGRFSEALRKLGAVDDAGAYVSRQCLVCRLYRQNLMSRGIIGGRGSSIVLGGSGKKYLTREVGTRRCLELGDIALYPSYDISLILDDLEASDGLRQ.

The interval 95 to 126 (GKGGEAGQRAGEDDERMDEGVPEEGAPRSPHP) is disordered. The segment covering 106–116 (EDDERMDEGVP) has biased composition (acidic residues).

Belongs to the herpesviridae UL95 family.

The chain is Gene 34 protein (34) from Equus caballus (Horse).